Reading from the N-terminus, the 382-residue chain is Acetyltransferase eriL (382 aa).

Transmembrane regions (helical) follow at residues 5–25 (LQPL…LGAV), 33–53 (ALLF…TTTG), 59–79 (IVTW…LLIN), 146–166 (TLFY…SPVF), 192–212 (LWSY…ALGV), and 335–355 (GYMW…DPQF).

Belongs to the wax synthase family.

It localises to the membrane. It carries out the reaction cyathatriol + acetyl-CoA = 11-O-acetylcyathatriol + CoA. It catalyses the reaction cyathin A3 + acetyl-CoA = 11-O-acetylcyathin A3 + CoA. Its pathway is secondary metabolite biosynthesis. Acetyltransferase; part of the gene cluster that mediates the biosynthesis of erinacines, cyathane-xylosides that show unique biological activities, including leishmanicidal activity, stimulating activity for nerve growth-factor synthesis, and agonistic activity toward the kappa opioid receptor. Within the pathway, eriL converts cyathatriol into 11-O-acetyl-cyathatriol. EriL is also able to acetylate cyathin A3 to produce 11-O-acetylcyathin A3. The first step of the erinacines biosynthesis pathway is catalyzed by the geranylgeranyl diphosphate (GGPP) synthase eriE via conversion of farnesyl pyrophosphate and isopentyl pyrophosphate into geranylgeranyl pyrophosphate (GGPP). GGPP is then substrate of the diterpene cyclase eriG for the production of cyatha-3,12-diene. The cytochrome P450 monooxygenase eriI then hydroxylates cyatha-3,12-diene at C-14 of the seven-membered ring to produce erinacol, which is further hydroxylated at C-15 by the cytochrome P450 monooxygenase eriC to yield cyathadiol. The cytochrome P450 monooxygenase eriA then catalyzes C-11 hydroxylation in the presence of the short chain dehydrogenase/reductase (SDR) eriH, which leads to the production of cyathatriol. The acetyltransferase eriL converts cyathatriol into 11-O-acetyl-cyathatriol. The SDR eriH catalyzes further oxidation of 11-O-acetyl-cyathatriol into 1-O-acetylcyathin A3. Finally, the glycosyl transferase eriJ tranfers xylose from UDP-xylose onto C-14 of 11-O-acetyl-cyathatriol to form eracine Q. EriJ is also able to convert 11-O-acetyl-cyathatriol to eracine Q2 by using UDP-D-glucose as cosubstrate, but at a lower rate. This Hericium erinaceus (Lion's mane mushroom) protein is Acetyltransferase eriL.